The chain runs to 260 residues: 3'-5' ssDNA/RNA exonuclease TatD (260 aa).

Residues E91, H127, and H152 each coordinate a divalent metal cation.

This sequence belongs to the metallo-dependent hydrolases superfamily. TatD-type hydrolase family. TatD subfamily. Monomer. Mg(2+) serves as cofactor.

It localises to the cytoplasm. In terms of biological role, 3'-5' exonuclease that prefers single-stranded DNA and RNA. May play a role in the H(2)O(2)-induced DNA damage repair. This Salmonella typhimurium (strain LT2 / SGSC1412 / ATCC 700720) protein is 3'-5' ssDNA/RNA exonuclease TatD.